The following is a 162-amino-acid chain: Probable E3 ubiquitin-protein ligase XERICO (162 aa).

The chain crosses the membrane as a helical span at residues 12-28 (GMLCVILVNTALSISIV). An RING-type; atypical zinc finger spans residues 103-145 (CSVCLSKFQGDSEINKLKCGHLFHKTCLEKWIDYWNITCPLCR).

Interacts with UBC8 and TULP9. In terms of tissue distribution, ubiquitous. Higher expression in actively growing tissues.

It is found in the membrane. The catalysed reaction is S-ubiquitinyl-[E2 ubiquitin-conjugating enzyme]-L-cysteine + [acceptor protein]-L-lysine = [E2 ubiquitin-conjugating enzyme]-L-cysteine + N(6)-ubiquitinyl-[acceptor protein]-L-lysine.. Its pathway is protein modification; protein ubiquitination. Functionally, function on abscisic acid homeostasis at post-translational level, probably through ubiquitin/proteasome-dependent substrate-specific degradation. The protein is Probable E3 ubiquitin-protein ligase XERICO (XERICO) of Arabidopsis thaliana (Mouse-ear cress).